Reading from the N-terminus, the 437-residue chain is Phosphoethanolamine N-methyltransferase 2 (437 aa).

N-methylethanolamine phosphate contacts are provided by residues 186–187 and Tyr195; that span reads QY. Residues 204 to 205, Gly232, Asp254, 281 to 282, and Arg298 contribute to the S-adenosyl-L-homocysteine site; these read IS and DA. Residues Tyr329, Tyr343, 347 to 349, and Lys415 each bind N-methylethanolamine phosphate; that span reads RAY.

It belongs to the class I-like SAM-binding methyltransferase superfamily.

The enzyme catalyses N-methylethanolamine phosphate + S-adenosyl-L-methionine = N,N-dimethylethanolamine phosphate + S-adenosyl-L-homocysteine + H(+). It carries out the reaction N,N-dimethylethanolamine phosphate + S-adenosyl-L-methionine = phosphocholine + S-adenosyl-L-homocysteine + H(+). Its pathway is phospholipid metabolism; phosphatidylcholine biosynthesis; phosphocholine from phosphoethanolamine. Feedback inhibition by phosphatidylcholine and also by S-adenosylhomocysteine. Catalyzes the last two methylation reactions in the synthesis of phosphocholine, by converting phospho-monomethylethanolamine (N-methylethanolamine phosphate) into phospho-dimethylethanolamine (N,N-dimethylethanolamine phosphate) and the latter into phosphocholine. Phosphocholine is a precursor for phosphatidylcholine, a major component in membranes and a precursor itself in the production of glycoconjugates secreted by parasitic nematodes to avoid host immune responses. The protein is Phosphoethanolamine N-methyltransferase 2 of Caenorhabditis elegans.